The sequence spans 186 residues: dCTP deaminase (186 aa).

107-112 (KSTYAR) is a binding site for dCTP. E133 (proton donor/acceptor) is an active-site residue. The dCTP site is built by Q152, Y166, K175, and Q176.

The protein belongs to the dCTP deaminase family. As to quaternary structure, homotrimer.

It catalyses the reaction dCTP + H2O + H(+) = dUTP + NH4(+). It functions in the pathway pyrimidine metabolism; dUMP biosynthesis; dUMP from dCTP (dUTP route): step 1/2. Catalyzes the deamination of dCTP to dUTP. The sequence is that of dCTP deaminase from Wolinella succinogenes (strain ATCC 29543 / DSM 1740 / CCUG 13145 / JCM 31913 / LMG 7466 / NCTC 11488 / FDC 602W) (Vibrio succinogenes).